We begin with the raw amino-acid sequence, 348 residues long: Sec-independent protein translocase protein TatC (348 aa).

A run of 6 helical transmembrane segments spans residues 7 to 27 (LCLTVSTILCAGFASNLMDIL), 162 to 182 (VVISFPLLLYFLLQFIIPGLL), 192 to 212 (CMAVGFGLFLAGTLFCYFIVL), 244 to 264 (MILMFGLAFELPVVVMPFVKL), 278 to 298 (YAIVAIAVLAAVITPTPDVAT), and 299 to 319 (MMLMAVPMYALYEICIILAWM).

This sequence belongs to the TatC family. Forms a complex with TatA.

The protein resides in the cell membrane. In terms of biological role, part of the twin-arginine translocation (Tat) system that transports large folded proteins containing a characteristic twin-arginine motif in their signal peptide across membranes. This chain is Sec-independent protein translocase protein TatC, found in Akkermansia muciniphila (strain ATCC BAA-835 / DSM 22959 / JCM 33894 / BCRC 81048 / CCUG 64013 / CIP 107961 / Muc).